Here is a 757-residue protein sequence, read N- to C-terminus: Kin of IRRE-like protein 1 (757 aa).

The N-terminal stretch at Met1 to Ser16 is a signal peptide. Residues Gln17 to Ala499 are Extracellular-facing. Ig-like C2-type domains lie at Thr21–Thr115, Pro120–Glu216, Pro223–Ser299, Pro308–Leu387, and Pro392–Glu488. A disulfide bridge links Cys42 with Cys100. Residues Asn46 and Asn140 are each glycosylated (N-linked (GlcNAc...) asparagine). 2 disulfides stabilise this stretch: Cys143/Cys200 and Cys244/Cys287. Residue Asn297 is glycosylated (N-linked (GlcNAc...) asparagine). A disulfide bridge links Cys329 with Cys371. A Cell attachment site motif is present at residues Arg405 to Asp407. A disulfide bond links Cys413 and Cys472. Asn471 carries N-linked (GlcNAc...) asparagine glycosylation. Residues Gly500–Leu520 form a helical membrane-spanning segment. At Tyr521–Val757 the chain is on the cytoplasmic side. Ser574 carries the post-translational modification Phosphoserine. Tyr605 and Tyr606 each carry phosphotyrosine; by FYN. Tyr622 and Tyr625 each carry phosphotyrosine. The segment at Gln649–Thr679 is disordered. Tyr724 carries the phosphotyrosine modification.

Belongs to the immunoglobulin superfamily. In terms of assembly, interacts with TJP1/ZO-1 and with NPHS2/podocin (via the C-terminus). Interacts with NPHS1/nephrin (via the Ig-like domains); this interaction is dependent on KIRREL1 glycosylation. Homodimer (via the Ig-like domains). Interacts when tyrosine-phosphorylated with GRB2. Phosphorylation probably regulates the interaction with NSH2. Phosphorylated at Tyr-605 and Tyr-606 by FYN, leading to GRB2 binding. Post-translationally, N-glycosylated. Abundantly expressed in kidney. Specifically expressed in podocytes of kidney glomeruli.

It localises to the cell membrane. Required for proper function of the glomerular filtration barrier. It is involved in the maintenance of a stable podocyte architecture with interdigitating foot processes connected by specialized cell-cell junctions, known as the slit diaphragm. It is a signaling protein that needs the presence of TEC kinases to fully trans-activate the transcription factor AP-1. The sequence is that of Kin of IRRE-like protein 1 from Homo sapiens (Human).